Consider the following 339-residue polypeptide: Putative clathrin assembly protein At1g14686 (339 aa).

In terms of domain architecture, ENTH spans 16–148; sequence SLIAADDILT…ILFHDGNRHR (133 aa). Residues 283-307 form a disordered region; sequence ESSEESAERTEIAEEEEEEEEEIET. Acidic residues predominate over residues 295–305; that stretch reads AEEEEEEEEEI.

It is found in the membrane. It localises to the clathrin-coated pit. The protein localises to the golgi apparatus. The protein resides in the cytoplasmic vesicle. Its subcellular location is the clathrin-coated vesicle. The protein is Putative clathrin assembly protein At1g14686 of Arabidopsis thaliana (Mouse-ear cress).